We begin with the raw amino-acid sequence, 309 residues long: General transcription factor IIH subunit 3 (309 aa).

Residues 269–286 (CSVCLSIFCNFSPICTTC) form a C4-type zinc finger.

This sequence belongs to the TFB4 family. Part of a TFIID-containing RNA polymerase II pre-initiation complex that is composed of TBP and at least GTF2A1, GTF2A2, GTF2E1, GTF2E2, GTF2F1, GTF2H2, GTF2H3, GTF2H4, GTF2H5, GTF2B, TCEA1, ERCC2, ERCC3, TAF1, TAF2, TAF3, TAF4, TAF5, TAF6, TAF7, TAF8, TAF9, TAF10, TAF11, TAF12 and TAF13. Component of the 7-subunit TFIIH core complex composed of XPB/ERCC3, XPD/ERCC2, GTF2H1, GTF2H2, GTF2H3, GTF2H4 and GTF2H5, which is active in NER. The core complex associates with the 3-subunit CDK-activating kinase (CAK) module composed of CCNH/cyclin H, CDK7 and MNAT1 to form the 10-subunit holoenzyme (holo-TFIIH) active in transcription. Interacts with RARA; the interaction requires prior phosphorylation of RARA on 'Ser-369' which then enhances interaction of RARA with CDK7.

The protein resides in the nucleus. Its function is as follows. Component of the general transcription and DNA repair factor IIH (TFIIH) core complex, which is involved in general and transcription-coupled nucleotide excision repair (NER) of damaged DNA and, when complexed to CAK, in RNA transcription by RNA polymerase II. In NER, TFIIH acts by opening DNA around the lesion to allow the excision of the damaged oligonucleotide and its replacement by a new DNA fragment. In transcription, TFIIH has an essential role in transcription initiation. When the pre-initiation complex (PIC) has been established, TFIIH is required for promoter opening and promoter escape. Phosphorylation of the C-terminal tail (CTD) of the largest subunit of RNA polymerase II by the kinase module CAK controls the initiation of transcription. The polypeptide is General transcription factor IIH subunit 3 (Gtf2h3) (Mus musculus (Mouse)).